Reading from the N-terminus, the 200-residue chain is Blue fluorescence protein (200 aa).

Lumazine-binding repeat units follow at residues 1 to 111 and 112 to 200; these read MFKG…TGGR and SLSG…AGNW.

As to quaternary structure, monomer.

The protein localises to the cytoplasm. Functionally, blue fluorescence protein (BFP) that can bind 6,7-dimethyl-8-ribityllumazine, riboflavin, and 6-methyl-7-oxo-8-ribityllumazine as a bound fluorophore. Has no riboflavin-synthase activity. The chain is Blue fluorescence protein from Aliivibrio fischeri (Vibrio fischeri).